The sequence spans 316 residues: 4-hydroxy-3-methylbut-2-enyl diphosphate reductase (316 aa).

Cys-12 contributes to the [4Fe-4S] cluster binding site. The (2E)-4-hydroxy-3-methylbut-2-enyl diphosphate site is built by His-43 and His-81. 2 residues coordinate dimethylallyl diphosphate: His-43 and His-81. Isopentenyl diphosphate contacts are provided by His-43 and His-81. Position 103 (Cys-103) interacts with [4Fe-4S] cluster. A (2E)-4-hydroxy-3-methylbut-2-enyl diphosphate-binding site is contributed by His-131. His-131 lines the dimethylallyl diphosphate pocket. His-131 contacts isopentenyl diphosphate. The Proton donor role is filled by Glu-133. Thr-170 contacts (2E)-4-hydroxy-3-methylbut-2-enyl diphosphate. [4Fe-4S] cluster is bound at residue Cys-198. Residues Ser-226, Asn-228, and Ser-271 each contribute to the (2E)-4-hydroxy-3-methylbut-2-enyl diphosphate site. 3 residues coordinate dimethylallyl diphosphate: Ser-226, Asn-228, and Ser-271. Ser-226, Asn-228, and Ser-271 together coordinate isopentenyl diphosphate.

Belongs to the IspH family. Requires [4Fe-4S] cluster as cofactor.

The enzyme catalyses isopentenyl diphosphate + 2 oxidized [2Fe-2S]-[ferredoxin] + H2O = (2E)-4-hydroxy-3-methylbut-2-enyl diphosphate + 2 reduced [2Fe-2S]-[ferredoxin] + 2 H(+). The catalysed reaction is dimethylallyl diphosphate + 2 oxidized [2Fe-2S]-[ferredoxin] + H2O = (2E)-4-hydroxy-3-methylbut-2-enyl diphosphate + 2 reduced [2Fe-2S]-[ferredoxin] + 2 H(+). It participates in isoprenoid biosynthesis; dimethylallyl diphosphate biosynthesis; dimethylallyl diphosphate from (2E)-4-hydroxy-3-methylbutenyl diphosphate: step 1/1. The protein operates within isoprenoid biosynthesis; isopentenyl diphosphate biosynthesis via DXP pathway; isopentenyl diphosphate from 1-deoxy-D-xylulose 5-phosphate: step 6/6. Catalyzes the conversion of 1-hydroxy-2-methyl-2-(E)-butenyl 4-diphosphate (HMBPP) into a mixture of isopentenyl diphosphate (IPP) and dimethylallyl diphosphate (DMAPP). Acts in the terminal step of the DOXP/MEP pathway for isoprenoid precursor biosynthesis. This Bacillus cereus (strain AH820) protein is 4-hydroxy-3-methylbut-2-enyl diphosphate reductase.